The sequence spans 64 residues: MMFRLTSVSCILLVIAFLNLVGLTNACTSEGYSCSSDSNCCKNVCCWNVCESHCGHHGKRATFQ.

The signal sequence occupies residues 1–26 (MMFRLTSVSCILLVIAFLNLVGLTNA). 4 disulfides stabilise this stretch: Cys-27/Cys-41, Cys-34/Cys-46, Cys-40/Cys-50, and Cys-45/Cys-54. The residue at position 57 (His-57) is a Histidine amide. The propeptide occupies 61 to 64 (ATFQ).

It belongs to the conotoxin I2 superfamily. Expressed by the venom duct.

The protein resides in the secreted. The chain is Conotoxin Im11.4 from Conus imperialis (Imperial cone).